The chain runs to 247 residues: Segregation and condensation protein A (247 aa).

This sequence belongs to the ScpA family. In terms of assembly, component of a cohesin-like complex composed of ScpA, ScpB and the Smc homodimer, in which ScpA and ScpB bind to the head domain of Smc. The presence of the three proteins is required for the association of the complex with DNA.

The protein localises to the cytoplasm. In terms of biological role, participates in chromosomal partition during cell division. May act via the formation of a condensin-like complex containing Smc and ScpB that pull DNA away from mid-cell into both cell halves. This chain is Segregation and condensation protein A, found in Bacillus anthracis (strain A0248).